Here is a 640-residue protein sequence, read N- to C-terminus: Threonine--tRNA ligase (640 aa).

Residues 1 to 61 (MPIITLPDGS…DHDATLQIIT (61 aa)) enclose the TGS domain. Positions 242 to 533 (DHRKLGKRLD…LIEHYEGAFP (292 aa)) are catalytic. Positions 333, 384, and 510 each coordinate Zn(2+).

The protein belongs to the class-II aminoacyl-tRNA synthetase family. Homodimer. Zn(2+) is required as a cofactor.

It is found in the cytoplasm. The enzyme catalyses tRNA(Thr) + L-threonine + ATP = L-threonyl-tRNA(Thr) + AMP + diphosphate + H(+). Its function is as follows. Catalyzes the attachment of threonine to tRNA(Thr) in a two-step reaction: L-threonine is first activated by ATP to form Thr-AMP and then transferred to the acceptor end of tRNA(Thr). Also edits incorrectly charged L-seryl-tRNA(Thr). This is Threonine--tRNA ligase from Azotobacter vinelandii (strain DJ / ATCC BAA-1303).